Here is a 171-residue protein sequence, read N- to C-terminus: Skp-like protein (171 aa).

The first 21 residues, 1-21, serve as a signal peptide directing secretion; that stretch reads MKKLLFSTFLLVLGSTSAAHA.

This sequence belongs to the Skp family.

The polypeptide is Skp-like protein (Chlamydia pneumoniae (Chlamydophila pneumoniae)).